The following is a 281-amino-acid chain: MSTSAASLCCSSTQVNGFGLRPERSLLYQPTSFSFSRRRTHGIVKASSRVDRFSKSDIIVSPSILSANFAKLGEQVKAVELAGCDWIHVDVMDGRFVPNITIGPLVVDALRPVTDLPLDVHLMIVEPEQRVPDFIKAGADIVSVHCEQQSTIHLHRTVNQIKSLGAKAGVVLNPGTPLSAIEYVLDMVDLVLIMSVNPGFGGQSFIESQVKKISDLRKMCAEKGVNPWIEVDGGVTPANAYKVIEAGANALVAGSAVFGAKDYAEAIKGIKASKRPAAVAV.

Residues 1 to 45 (MSTSAASLCCSSTQVNGFGLRPERSLLYQPTSFSFSRRRTHGIVK) constitute a chloroplast transit peptide. Residue S63 coordinates substrate. H88, D90, and H121 together coordinate a divalent metal cation. D90 functions as the Proton acceptor in the catalytic mechanism. Substrate contacts are provided by residues H121, 199–202 (GFGG), 232–234 (DGG), and 254–256 (GSA). D232 contacts a divalent metal cation. Residue D232 is the Proton donor of the active site.

Belongs to the ribulose-phosphate 3-epimerase family. As to quaternary structure, homooctamer. The cofactor is Co(2+). Requires Fe(2+) as cofactor. It depends on Mn(2+) as a cofactor. Zn(2+) is required as a cofactor. Present in roots, seeds and flowers. Accumulates in nematode feeding sites (NFS).

The protein resides in the plastid. It localises to the chloroplast thylakoid membrane. It carries out the reaction D-ribulose 5-phosphate = D-xylulose 5-phosphate. The protein operates within carbohydrate biosynthesis; Calvin cycle. Functionally, essential protein required during embryogenesis. Catalyzes the reversible epimerization of D-ribulose 5-phosphate to D-xylulose 5-phosphate. Essential for the early steps of nematode feeding sites (NFS, multinucleated root cells) formation induced by the root-knot nematodes Heterodera schachtii, Meloidogyne incognita, M.javanica and M.hapla. The sequence is that of Ribulose-5-phosphate-3-epimerase, chloroplastic from Arabidopsis thaliana (Mouse-ear cress).